The sequence spans 184 residues: Phosphorelay intermediate protein YPD1 (184 aa).

An HPt domain is found at 30 to 125 (EEGFSKSLVE…SAENVAVNDG (96 aa)). His69 carries the phosphohistidine modification. The disordered stretch occupies residues 120–152 (VAVNDGETNPENGSNGNETSNNKTNTSNIPDES). The segment covering 125-147 (GETNPENGSNGNETSNNKTNTSN) has biased composition (low complexity).

Belongs to the YPD1 family.

It localises to the cytoplasm. Its subcellular location is the nucleus. Functionally, phosphorelay intermediate protein that is part of the bifurcated SLN1-YPD1-SKN7/SSK1 two-component regulatory system, which controls activity of the HOG1 pathway and gene expression in response to oxidative stress and probably to changes in the osmolarity of the extracellular environment. Catalyzes the phosphoryl group transfer from the membrane-bound histidine kinase SLN1 to two distinct response regulators SSK1 and SKN7. The chain is Phosphorelay intermediate protein YPD1 (YPD1) from Candida albicans (strain SC5314 / ATCC MYA-2876) (Yeast).